Reading from the N-terminus, the 297-residue chain is MTEQQFHSGFVSIIGRPNVGKSTLLNKILGDKIVITSDKPQTTRNRIQGIHNLPGCQIVFIDTPGIHRAKSRLNKYMVDVALSSIKEVDVILFLVEADTKPANQEETILGALASAEAPVVLVINKVDLVAKESLLEKMAAYSGLYPFREVIPVSALTGDNTGRLVQVVRDLLPEGPPYFPDDILTDVPERFVVAEIVREKVFRLTHDEVPYSVAVVVESFKERDDGLILISAVINVERDSQKGIIIGRKGEMLKKIGMQARREIEELLDTRIFLELFVRVSREWSENKQMLKEFGYE.

The region spanning 7-174 (HSGFVSIIGR…VQVVRDLLPE (168 aa)) is the Era-type G domain. The G1 stretch occupies residues 15–22 (GRPNVGKS). 15–22 (GRPNVGKS) is a binding site for GTP. Residues 41 to 45 (QTTRN) form a G2 region. Residues 62–65 (DTPG) form a G3 region. GTP-binding positions include 62–66 (DTPGI) and 124–127 (NKVD). Residues 124–127 (NKVD) are G4. The tract at residues 153–155 (VSA) is G5. One can recognise a KH type-2 domain in the interval 205–282 (THDEVPYSVA…FLELFVRVSR (78 aa)).

It belongs to the TRAFAC class TrmE-Era-EngA-EngB-Septin-like GTPase superfamily. Era GTPase family. As to quaternary structure, monomer.

The protein localises to the cytoplasm. Its subcellular location is the cell inner membrane. Functionally, an essential GTPase that binds both GDP and GTP, with rapid nucleotide exchange. Plays a role in 16S rRNA processing and 30S ribosomal subunit biogenesis and possibly also in cell cycle regulation and energy metabolism. This Geotalea daltonii (strain DSM 22248 / JCM 15807 / FRC-32) (Geobacter daltonii) protein is GTPase Era.